Consider the following 154-residue polypeptide: 17 kDa surface antigen (154 aa).

The signal sequence occupies residues 1-19; it reads MKLLSKIMIIALAASMLQA. C20 is lipidated: N-palmitoyl cysteine. Residue C20 is the site of S-diacylglycerol cysteine attachment.

The protein belongs to the rickettsiale 17 kDa surface antigen family.

The protein localises to the cell outer membrane. The polypeptide is 17 kDa surface antigen (omp) (Rickettsia australis).